We begin with the raw amino-acid sequence, 452 residues long: MTNIALLQSLGLFDARVPRYTSYPAAPVFSGAVGADFQAQAIEALDPAVPISVYVHVPFCERLCWFCACRTQGTQTLAPVEAYVGTLLQELELVKQHLPAGVKAGRLHWGGGTPTILSPELIHKLAQAIKAVIPFAEDYEFSVEIDPMMVDEPKIRALSEEGMNRASIGIQDFTDIVQNAIGREQPFENTKACVETLRRYGVHSLNTDLVYGLPHQNRESLAATIDKVLSLRPDRVAIFGYAHVPWMAKRQKLIDETVLPPDIERHELANLAARLFTEGGFERIGIDHFALPDDSMAVAARSRKLRRNFQGYTDDTCPTLLGIGASSISKFEQGYLQNTAATAAYIKSIEEGRLPGYRGHRMTEEDYLHGRAIEMIMCDFFLDLPALRARFGEPAETMVPRIAEAAEKFTPFVTVDADGSMSIAKEGRALARMIARLFDAYETPEARYSQAS.

In terms of domain architecture, Radical SAM core spans 45 to 278 (LDPAVPISVY…ANLAARLFTE (234 aa)). Tyr-54 provides a ligand contact to S-adenosyl-L-methionine. Residues Cys-60 and Cys-64 each coordinate [4Fe-4S] cluster. Position 66 (Phe-66) interacts with S-adenosyl-L-methionine. Cys-67 serves as a coordination point for [4Fe-4S] cluster. S-adenosyl-L-methionine is bound by residues Gly-111, 112 to 113 (GT), Glu-144, Gln-171, Arg-183, and Asp-208.

This sequence belongs to the anaerobic coproporphyrinogen-III oxidase family. As to quaternary structure, monomer. [4Fe-4S] cluster serves as cofactor.

It localises to the cytoplasm. It carries out the reaction coproporphyrinogen III + 2 S-adenosyl-L-methionine = protoporphyrinogen IX + 2 5'-deoxyadenosine + 2 L-methionine + 2 CO2. It participates in porphyrin-containing compound metabolism; protoporphyrin-IX biosynthesis; protoporphyrinogen-IX from coproporphyrinogen-III (AdoMet route): step 1/1. Functionally, anaerobic transformation of coproporphyrinogen III into protoporphyrinogen IX. Dedicated to bacteriochlorophyll biosynthesis. The protein is Coproporphyrinogen III oxidase, anaerobic 1 (hemN) of Cereibacter sphaeroides (strain ATCC 17023 / DSM 158 / JCM 6121 / CCUG 31486 / LMG 2827 / NBRC 12203 / NCIMB 8253 / ATH 2.4.1.) (Rhodobacter sphaeroides).